Here is a 260-residue protein sequence, read N- to C-terminus: DNA repair protein RecO (260 aa).

Belongs to the RecO family.

Its function is as follows. Involved in DNA repair and RecF pathway recombination. This is DNA repair protein RecO from Ligilactobacillus salivarius (strain UCC118) (Lactobacillus salivarius).